The following is a 525-amino-acid chain: Glutamyl-tRNA(Gln) amidotransferase subunit A, mitochondrial (525 aa).

Active-site charge relay system residues include lysine 76 and serine 168. Serine 192 serves as the catalytic Acyl-ester intermediate.

Belongs to the amidase family. GatA subfamily. Subunit of the heterotrimeric GatCAB amidotransferase (AdT) complex, composed of A (QRSL1), B (GATB) and C (GATC) subunits.

The protein resides in the mitochondrion. The enzyme catalyses L-glutamyl-tRNA(Gln) + L-glutamine + ATP + H2O = L-glutaminyl-tRNA(Gln) + L-glutamate + ADP + phosphate + H(+). In terms of biological role, allows the formation of correctly charged Gln-tRNA(Gln) through the transamidation of misacylated Glu-tRNA(Gln) in the mitochondria. The reaction takes place in the presence of glutamine and ATP through an activated gamma-phospho-Glu-tRNA(Gln). This is Glutamyl-tRNA(Gln) amidotransferase subunit A, mitochondrial (Qrsl1) from Rattus norvegicus (Rat).